Reading from the N-terminus, the 273-residue chain is 3-methyl-2-oxobutanoate hydroxymethyltransferase (273 aa).

Mg(2+) is bound by residues Asp53 and Asp92. 3-methyl-2-oxobutanoate contacts are provided by residues 53 to 54 (DS), Asp92, and Lys122. Residue Glu124 coordinates Mg(2+). Glu191 functions as the Proton acceptor in the catalytic mechanism.

It belongs to the PanB family. In terms of assembly, homodecamer; pentamer of dimers. Mg(2+) is required as a cofactor.

The protein resides in the cytoplasm. The enzyme catalyses 3-methyl-2-oxobutanoate + (6R)-5,10-methylene-5,6,7,8-tetrahydrofolate + H2O = 2-dehydropantoate + (6S)-5,6,7,8-tetrahydrofolate. It functions in the pathway cofactor biosynthesis; (R)-pantothenate biosynthesis; (R)-pantoate from 3-methyl-2-oxobutanoate: step 1/2. In terms of biological role, catalyzes the reversible reaction in which hydroxymethyl group from 5,10-methylenetetrahydrofolate is transferred onto alpha-ketoisovalerate to form ketopantoate. The protein is 3-methyl-2-oxobutanoate hydroxymethyltransferase of Parabacteroides distasonis (strain ATCC 8503 / DSM 20701 / CIP 104284 / JCM 5825 / NCTC 11152).